Reading from the N-terminus, the 256-residue chain is 5-oxoprolinase subunit A 3 (256 aa).

The protein belongs to the LamB/PxpA family. Forms a complex composed of PxpA, PxpB and PxpC.

It catalyses the reaction 5-oxo-L-proline + ATP + 2 H2O = L-glutamate + ADP + phosphate + H(+). Catalyzes the cleavage of 5-oxoproline to form L-glutamate coupled to the hydrolysis of ATP to ADP and inorganic phosphate. The polypeptide is 5-oxoprolinase subunit A 3 (Pseudomonas syringae pv. tomato (strain ATCC BAA-871 / DC3000)).